A 271-amino-acid polypeptide reads, in one-letter code: Urease accessory protein UreD (271 aa).

It belongs to the UreD family. In terms of assembly, ureD, UreF and UreG form a complex that acts as a GTP-hydrolysis-dependent molecular chaperone, activating the urease apoprotein by helping to assemble the nickel containing metallocenter of UreC. The UreE protein probably delivers the nickel.

It is found in the cytoplasm. In terms of biological role, required for maturation of urease via the functional incorporation of the urease nickel metallocenter. This Azorhizobium caulinodans (strain ATCC 43989 / DSM 5975 / JCM 20966 / LMG 6465 / NBRC 14845 / NCIMB 13405 / ORS 571) protein is Urease accessory protein UreD.